The primary structure comprises 687 residues: Protein-glutamine gamma-glutamyltransferase 2 (687 aa).

Position 2 is an N-acetylalanine (alanine 2). 2 disulfide bridges follow: cysteine 230–cysteine 370 and cysteine 370–cysteine 371. Active-site residues include cysteine 277, histidine 335, and aspartate 358. Asparagine 398, aspartate 400, glutamate 437, glutamate 447, and glutamate 452 together coordinate Ca(2+). Lysine 468 carries the N6-acetyllysine modification. 476-483 (RIRVGEGM) is a binding site for GTP. Residue glutamate 539 participates in Ca(2+) binding. 580–583 (RDIY) serves as a coordination point for GTP. Glutamine 633 participates in a covalent cross-link: Isoglutamyl lysine isopeptide (Gln-Lys) (interchain with K-?).

The protein belongs to the transglutaminase superfamily. Transglutaminase family. In terms of assembly, monomer. Interacts with phospholipase C; promoting alpha-1 adrenergic receptor signaling. Interacts with PLCD1. The cofactor is Ca(2+). In terms of processing, disulfide bond formation inactivates the calcium-dependent acyltransferase activity. Cys-370 can form disulfide bonds with both Cys-230 and Cys-371: formation of a disulfide bond between Cys-230 and Cys-370 facilitates formation of the disulfide between Cys-370 and Cys-371, which promotes inactivation of the acyltransferase activity. May also form interchain disulfids between Cys-230 and Cys-370. Ca(2+) protects against disulfide bond formation and inactivation. Auto-transglutaminated: Forms covalent cross-links mediated by transglutaminase between Gln-633 and the epsilon-amino group of a lysine residue of itself or HMGB1, forming homopolymers and heteropolymers, respectively. Post-translationally, S-nitrosylated, leading to inactivation of the acyltransferase activity. As to expression, highest levels are detected in the lung. Lower levels are found in the liver, spleen and heart, but not in the brain.

It localises to the cytoplasm. It is found in the cytosol. The protein localises to the nucleus. The protein resides in the chromosome. Its subcellular location is the secreted. It localises to the extracellular space. It is found in the extracellular matrix. The protein localises to the cell membrane. The protein resides in the mitochondrion. The catalysed reaction is L-glutaminyl-[protein] + L-lysyl-[protein] = [protein]-L-lysyl-N(6)-5-L-glutamyl-[protein] + NH4(+). It carries out the reaction L-glutaminyl-[protein] + serotonin = 5-serotonyl-L-glutamyl-[protein] + NH4(+). It catalyses the reaction L-glutaminyl-[protein] + dopamine = 5-dopaminyl-L-glutamyl-[protein] + NH4(+). The enzyme catalyses L-glutaminyl-[protein] + histamine = 5-histaminyl-L-glutamyl-[protein] + NH4(+). The catalysed reaction is L-glutaminyl-[protein] + (R)-noradrenaline = 5-(R)-noradrenalinyl-L-glutamyl-[protein] + NH4(+). It carries out the reaction L-glutaminyl-[protein] + H2O = L-glutamyl-[protein] + NH4(+). With respect to regulation, acyltransferase activity is regulated by the binding of GTP and Ca(2+): inactivated by GTP, which stabilizes its closed structure, thereby obstructing the accessibility of substrates to the active sites. In contrast, Ca(2+) acts as a cofactor by inducing conformational change to the active open form. In absence of Ca(2+), Mg(2+) may bind Ca(2+)-binding sites, promoting GTP-binding and subsequent inhibition of the acyltransferase activity. Extracellularly reduced and activated by CLIC3. Functionally, calcium-dependent acyltransferase that catalyzes the formation of covalent bonds between peptide-bound glutamine and various primary amines, such as gamma-amino group of peptide-bound lysine, or mono- and polyamines, thereby producing cross-linked or aminated proteins, respectively. Involved in many biological processes, such as bone development, angiogenesis, wound healing, cellular differentiation, chromatin modification and apoptosis. Acts as a protein-glutamine gamma-glutamyltransferase by mediating the cross-linking of proteins, such as ACO2, HSPB6, FN1, HMGB1, RAP1GDS1, SLC25A4/ANT1, SPP1 and WDR54. Under physiological conditions, the protein cross-linking activity is inhibited by GTP; inhibition is relieved by Ca(2+) in response to various stresses. When secreted, catalyzes cross-linking of proteins of the extracellular matrix, such as FN1 and SPP1 resulting in the formation of scaffolds. Plays a key role during apoptosis, both by (1) promoting the cross-linking of cytoskeletal proteins resulting in condensation of the cytoplasm, and by (2) mediating cross-linking proteins of the extracellular matrix, resulting in the irreversible formation of scaffolds that stabilize the integrity of the dying cells before their clearance by phagocytosis, thereby preventing the leakage of harmful intracellular components. In addition to protein cross-linking, can use different monoamine substrates to catalyze a vast array of protein post-translational modifications: mediates aminylation of serotonin, dopamine, noradrenaline or histamine into glutamine residues of target proteins to generate protein serotonylation, dopaminylation, noradrenalinylation or histaminylation, respectively. Mediates protein serotonylation of small GTPases during activation and aggregation of platelets, leading to constitutive activation of these GTPases. Plays a key role in chromatin organization by mediating serotonylation and dopaminylation of histone H3. Catalyzes serotonylation of 'Gln-5' of histone H3 (H3Q5ser) during serotonergic neuron differentiation, thereby facilitating transcription. Acts as a mediator of neurotransmission-independent role of nuclear dopamine in ventral tegmental area (VTA) neurons: catalyzes dopaminylation of 'Gln-5' of histone H3 (H3Q5dop), thereby regulating relapse-related transcriptional plasticity in the reward system. Regulates vein remodeling by mediating serotonylation and subsequent inactivation of ATP2A2/SERCA2. Also acts as a protein deamidase by mediating the side chain deamidation of specific glutamine residues of proteins to glutamate. Catalyzes specific deamidation of protein gliadin, a component of wheat gluten in the diet. May also act as an isopeptidase cleaving the previously formed cross-links. Also able to participate in signaling pathways independently of its acyltransferase activity: acts as a signal transducer in alpha-1 adrenergic receptor-mediated stimulation of phospholipase C-delta (PLCD) activity and is required for coupling alpha-1 adrenergic agonists to the stimulation of phosphoinositide lipid metabolism. This chain is Protein-glutamine gamma-glutamyltransferase 2, found in Bos taurus (Bovine).